Here is a 186-residue protein sequence, read N- to C-terminus: Adrenodoxin, mitochondrial (186 aa).

The N-terminal 58 residues, 1 to 58 (MAVRLLRVASAALGDTAVRWQPLVGPRAGNRGPGGSIWLGLGGRAAAARTLSLSARAW), are a transit peptide targeting the mitochondrion. S61 bears the Phosphoserine mark. Residue K64 is modified to N6-acetyllysine; alternate. K64 carries the post-translational modification N6-succinyllysine; alternate. The 105-residue stretch at 65 to 169 (ITVHFINRDG…NMTVRVPEAV (105 aa)) folds into the 2Fe-2S ferredoxin-type domain. [2Fe-2S] cluster is bound by residues C104, C110, C113, and C150. K156 carries the N6-succinyllysine modification. The residue at position 175 (S175) is a Phosphoserine.

Belongs to the adrenodoxin/putidaredoxin family. Interacts with CYP11A1. Requires [2Fe-2S] cluster as cofactor.

The protein localises to the mitochondrion matrix. In terms of biological role, essential for the synthesis of various steroid hormones. Participates in the reduction of mitochondrial cytochrome P450 for steroidogenesis. Transfers electrons from adrenodoxin reductase to CYP11A1, a cytochrome P450 that catalyzes cholesterol side-chain cleavage. Does not form a ternary complex with adrenodoxin reductase and CYP11A1 but shuttles between the two enzymes to transfer electrons. The chain is Adrenodoxin, mitochondrial (FDX1) from Sus scrofa (Pig).